We begin with the raw amino-acid sequence, 557 residues long: Formate--tetrahydrofolate ligase (557 aa).

An ATP-binding site is contributed by 66–73; it reads TPAGEGKS.

It belongs to the formate--tetrahydrofolate ligase family.

The catalysed reaction is (6S)-5,6,7,8-tetrahydrofolate + formate + ATP = (6R)-10-formyltetrahydrofolate + ADP + phosphate. It participates in one-carbon metabolism; tetrahydrofolate interconversion. In Clostridium botulinum (strain Kyoto / Type A2), this protein is Formate--tetrahydrofolate ligase.